Consider the following 124-residue polypeptide: uncharacterized protein (124 aa).

The helical transmembrane segment at 70–90 threads the bilayer; sequence LLYLALVLLLVVILSTAFFSI.

The protein resides in the membrane. This is an uncharacterized protein from Saccharomyces cerevisiae (strain ATCC 204508 / S288c) (Baker's yeast).